The sequence spans 475 residues: Ribulose bisphosphate carboxylase large chain (475 aa).

Positions 1 to 2 (MS) are excised as a propeptide. Position 3 is an N-acetylproline (Pro3). N6,N6,N6-trimethyllysine is present on Lys14. Residues Asn123 and Thr173 each coordinate substrate. Lys175 (proton acceptor) is an active-site residue. Lys177 is a binding site for substrate. 3 residues coordinate Mg(2+): Lys201, Asp203, and Glu204. Residue Lys201 is modified to N6-carboxylysine. The Proton acceptor role is filled by His294. Arg295, His327, and Ser379 together coordinate substrate.

It belongs to the RuBisCO large chain family. Type I subfamily. Heterohexadecamer of 8 large chains and 8 small chains; disulfide-linked. The disulfide link is formed within the large subunit homodimers. Requires Mg(2+) as cofactor. Post-translationally, the disulfide bond which can form in the large chain dimeric partners within the hexadecamer appears to be associated with oxidative stress and protein turnover.

It localises to the plastid. The protein localises to the chloroplast. It catalyses the reaction 2 (2R)-3-phosphoglycerate + 2 H(+) = D-ribulose 1,5-bisphosphate + CO2 + H2O. The enzyme catalyses D-ribulose 1,5-bisphosphate + O2 = 2-phosphoglycolate + (2R)-3-phosphoglycerate + 2 H(+). RuBisCO catalyzes two reactions: the carboxylation of D-ribulose 1,5-bisphosphate, the primary event in carbon dioxide fixation, as well as the oxidative fragmentation of the pentose substrate in the photorespiration process. Both reactions occur simultaneously and in competition at the same active site. The protein is Ribulose bisphosphate carboxylase large chain of Castanea sativa (Sweet chestnut).